We begin with the raw amino-acid sequence, 361 residues long: Chorismate synthase (361 aa).

Positions 38-49 (EKDMQHDLDRRR) are enriched in basic and acidic residues. Positions 38–58 (EKDMQHDLDRRRPGTSKYTTQ) are disordered. Residue arginine 48 coordinates NADP(+). Residues 125-127 (RSS), 238-239 (NA), glycine 278, 293-297 (KPTSS), and arginine 319 contribute to the FMN site.

It belongs to the chorismate synthase family. As to quaternary structure, homotetramer. FMNH2 serves as cofactor.

The catalysed reaction is 5-O-(1-carboxyvinyl)-3-phosphoshikimate = chorismate + phosphate. It functions in the pathway metabolic intermediate biosynthesis; chorismate biosynthesis; chorismate from D-erythrose 4-phosphate and phosphoenolpyruvate: step 7/7. Its function is as follows. Catalyzes the anti-1,4-elimination of the C-3 phosphate and the C-6 proR hydrogen from 5-enolpyruvylshikimate-3-phosphate (EPSP) to yield chorismate, which is the branch point compound that serves as the starting substrate for the three terminal pathways of aromatic amino acid biosynthesis. This reaction introduces a second double bond into the aromatic ring system. This Photobacterium profundum (strain SS9) protein is Chorismate synthase.